Reading from the N-terminus, the 906-residue chain is Coatomer subunit beta' (906 aa).

WD repeat units follow at residues 13–52 (ARSD…LVKT), 55–94 (VCDL…RVHM), 97–136 (AHSD…SCSQ), 140–180 (GHTH…PNFT), 183–224 (GHEK…CVQT), and 227–266 (GHAQ…LEST). At Lys-627 the chain carries N6-acetyllysine. The disordered stretch occupies residues 837–870 (EEGKDFQPSRSTAQQELDGKPASPTPVIVASHTA). Ser-859 carries the phosphoserine modification. At Thr-861 the chain carries Phosphothreonine. Residues 866–891 (ASHTANKEEKSLLELEVDLDNLELED) adopt a coiled-coil conformation.

It belongs to the WD repeat COPB2 family. Oligomeric complex that consists of at least the alpha, beta, beta', gamma, delta, epsilon and zeta subunits. Probably interacts with PEX11A. Interacts with SCYL1. Interacts with JAGN1.

The protein localises to the cytoplasm. It is found in the cytosol. Its subcellular location is the golgi apparatus membrane. It localises to the cytoplasmic vesicle. The protein resides in the COPI-coated vesicle membrane. Its function is as follows. The coatomer is a cytosolic protein complex that binds to dilysine motifs and reversibly associates with Golgi non-clathrin-coated vesicles, which further mediate biosynthetic protein transport from the ER, via the Golgi up to the trans Golgi network. Coatomer complex is required for budding from Golgi membranes, and is essential for the retrograde Golgi-to-ER transport of dilysine-tagged proteins. In mammals, the coatomer can only be recruited by membranes associated to ADP-ribosylation factors (ARFs), which are small GTP-binding proteins; the complex also influences the Golgi structural integrity, as well as the processing, activity, and endocytic recycling of LDL receptors. This coatomer complex protein, essential for Golgi budding and vesicular trafficking, is a selective binding protein (RACK) for protein kinase C, epsilon type. It binds to Golgi membranes in a GTP-dependent manner. In Homo sapiens (Human), this protein is Coatomer subunit beta' (COPB2).